A 968-amino-acid polypeptide reads, in one-letter code: Pumilio homolog 1 (968 aa).

Disordered regions lie at residues 1 to 25 and 138 to 171; these read MIPELGRRPMHRGNEDSSFGDDYEK and NNVLGGVGDRRKVNDNRSLFSMPPGFEGEKTGAS. Ser-194 is modified (phosphoserine). Disordered stretches follow at residues 204–240, 260–303, and 360–382; these read GHGHPVAQQPSRPASRNTFDENVDSNNNLSPSASQGI, GTPD…VTSG, and KSDQAHKATGSLRNSQLRGPHGS. Polar residues-rich tracts occupy residues 211–220 and 227–238; these read QQPSRPASRN and DSNNNLSPSASQ. At Thr-261 the chain carries Phosphothreonine. Residues 291 to 303 are compositionally biased toward polar residues; the sequence is TSNQSPFNGVTSG. The PUM-HD domain maps to 610–950; that stretch reads FGSSMLEEFK…HVVARIEKLV (341 aa). 8 Pumilio repeats span residues 630 to 665, 666 to 701, 702 to 737, 738 to 773, 774 to 810, 811 to 846, 847 to 882, and 883 to 924; these read EIAGHVVEFSSDQYGSRFIQQKLETATTDEKNMVYE, EIMPQALVLMTDVFGNYVIQKFFEHGLPPQRRELAE, KLFDHVLPLSLQMYGCRVIQKAIEVVDLDQKIKMVK, ELDGHVMRCVRDQNGNHVVQKCIECVPEENIEFIIS, TFFGHVVTLSTHPYGCRVIQRVLEHCHDPDTQSKVME, EILSTVSMLAQDQYGNYVVQHVLEHGKPDERTVIIK, ELAGKIVQMSQQKFASNVVEKCLTFGGPEERELLVN, and EMLG…LILT.

The protein localises to the cytoplasm. Sequence-specific RNA-binding protein that regulates translation and mRNA stability by binding the 3'-UTR of target mRNAs. Binds the APUM-binding elements (APBEs) in the 3'-UTR mRNA sequence of CLV1, PNH, WUS and FAS2. The polypeptide is Pumilio homolog 1 (APUM1) (Arabidopsis thaliana (Mouse-ear cress)).